The sequence spans 499 residues: uncharacterized protein (499 aa).

2 disordered regions span residues 76–118 (QATA…RLSP) and 208–268 (DFET…DWAN). Residues 87-104 (DPEKQTGKSRYHPSEEIR) are compositionally biased toward basic and acidic residues. Residues 208–263 (DFETEDDESGDDDSEDTGEDEDEEEWVAILEDEDEDDDDDDDDDEDDDDSDSDESL) are compositionally biased toward acidic residues. Ser355 carries the phosphoserine modification. The disordered stretch occupies residues 478–499 (AEGQIRKLLFPKTNQSTQPKPK). Polar residues predominate over residues 489–499 (KTNQSTQPKPK).

This is an uncharacterized protein from Arabidopsis thaliana (Mouse-ear cress).